We begin with the raw amino-acid sequence, 366 residues long: tRNA/tmRNA (uracil-C(5))-methyltransferase (366 aa).

Residues Gln190, Tyr218, Asn223, Glu239, and Asp299 each contribute to the S-adenosyl-L-methionine site. Cys324 acts as the Nucleophile in catalysis. The active-site Proton acceptor is Glu358.

Belongs to the class I-like SAM-binding methyltransferase superfamily. RNA M5U methyltransferase family. TrmA subfamily.

The catalysed reaction is uridine(54) in tRNA + S-adenosyl-L-methionine = 5-methyluridine(54) in tRNA + S-adenosyl-L-homocysteine + H(+). It carries out the reaction uridine(341) in tmRNA + S-adenosyl-L-methionine = 5-methyluridine(341) in tmRNA + S-adenosyl-L-homocysteine + H(+). Its function is as follows. Dual-specificity methyltransferase that catalyzes the formation of 5-methyluridine at position 54 (m5U54) in all tRNAs, and that of position 341 (m5U341) in tmRNA (transfer-mRNA). The polypeptide is tRNA/tmRNA (uracil-C(5))-methyltransferase (Cronobacter sakazakii (strain ATCC BAA-894) (Enterobacter sakazakii)).